A 189-amino-acid chain; its full sequence is MTEYKLVVVGAGGVGKSALTIQLIQNHFVDEYDPTIEDSYRKQVVIDGETCLLDILDTAGQEEYSAMRDQYMRTGEGFLCVFAINNSKSFADINLYREQIKRVKDSDDVPMVLVGNKCDLPTRTVDTKQAHELAKSYGIPFIETSAKTRQGVEDAFYTLVREIRQYRMKKLNSSDDGTQGCLGLSCAVM.

GTP-binding positions include 10–18 (GAGGVGKSA) and 29–30 (VD). An Effector region motif is present at residues 32–40 (YDPTIEDSY). 57–61 (DTAGQ) contributes to the GTP binding site. Serine 89 bears the Phosphoserine mark. 116–119 (NKCD) contacts GTP. Positions 166-185 (YRMKKLNSSDDGTQGCLGLS) are hypervariable region. Residue lysine 170 forms a Glycyl lysine isopeptide (Lys-Gly) (interchain with G-Cter in ubiquitin) linkage. Cysteine 181 carries S-palmitoyl cysteine lipidation. Cysteine 186 carries S-farnesyl cysteine lipidation. A propeptide spans 187-189 (AVM) (removed in mature form).

Belongs to the small GTPase superfamily. Ras family. As to quaternary structure, interacts (active GTP-bound form preferentially) with RGS14. Interacts (active GTP-bound form) with RASSF7. Interacts (active GTP-bound form) with both SHOC2 and PP1c (all isoforms) to form a tertiary complex; SHOC2 and PP1c preferably bind M-Ras/MRAS, but they also bind K-Ras/KRAS, N-Ras/NRAS and H-Ras/HRAS. Post-translationally, palmitoylated by the ZDHHC9-GOLGA7 complex. Depalmitoylated by ABHD17A, ABHD17B and ABHD17C. A continuous cycle of de- and re-palmitoylation regulates rapid exchange between plasma membrane and Golgi. In terms of processing, acetylation at Lys-104 prevents interaction with guanine nucleotide exchange factors (GEFs). Ubiquitinated by the BCR(LZTR1) E3 ubiquitin ligase complex at Lys-170 in a non-degradative manner, leading to inhibit Ras signaling by decreasing Ras association with membranes. Post-translationally, phosphorylation at Ser-89 enhances NRAS association with its downstream effectors.

The protein resides in the cell membrane. It localises to the golgi apparatus membrane. The enzyme catalyses GTP + H2O = GDP + phosphate + H(+). Its activity is regulated as follows. Alternates between an inactive form bound to GDP and an active form bound to GTP. Activated by a guanine nucleotide-exchange factor (GEF) and inactivated by a GTPase-activating protein (GAP). Ras proteins bind GDP/GTP and possess intrinsic GTPase activity. This chain is GTPase NRas (NRAS), found in Monodelphis domestica (Gray short-tailed opossum).